A 138-amino-acid polypeptide reads, in one-letter code: Small ribosomal subunit protein uS9c (138 aa).

The protein belongs to the universal ribosomal protein uS9 family.

The protein localises to the plastid. Its subcellular location is the chloroplast. This chain is Small ribosomal subunit protein uS9c (rps9), found in Phaeodactylum tricornutum (strain CCAP 1055/1).